The chain runs to 364 residues: Histidinol-phosphate aminotransferase (364 aa).

Residues 1-46 (MQPRDLSDHSPYVPGRGVEEVARDRGLDPDDLIKLSSNENPHGPSP) form a disordered region. A compositionally biased stretch (basic and acidic residues) spans 17 to 33 (GVEEVARDRGLDPDDLI). Position 222 is an N6-(pyridoxal phosphate)lysine (Lys-222).

This sequence belongs to the class-II pyridoxal-phosphate-dependent aminotransferase family. Histidinol-phosphate aminotransferase subfamily. Requires pyridoxal 5'-phosphate as cofactor.

It catalyses the reaction L-histidinol phosphate + 2-oxoglutarate = 3-(imidazol-4-yl)-2-oxopropyl phosphate + L-glutamate. It functions in the pathway amino-acid biosynthesis; L-histidine biosynthesis; L-histidine from 5-phospho-alpha-D-ribose 1-diphosphate: step 7/9. This Halorubrum lacusprofundi (strain ATCC 49239 / DSM 5036 / JCM 8891 / ACAM 34) protein is Histidinol-phosphate aminotransferase.